The primary structure comprises 38 residues: Large ribosomal subunit protein bL36 (38 aa).

It belongs to the bacterial ribosomal protein bL36 family.

This Azotobacter vinelandii (strain DJ / ATCC BAA-1303) protein is Large ribosomal subunit protein bL36.